The sequence spans 180 residues: NADH-quinone oxidoreductase subunit I (180 aa).

2 4Fe-4S ferredoxin-type domains span residues 48-80 (IVLT…LQKA) and 90-119 (EFFR…LTPD). [4Fe-4S] cluster contacts are provided by cysteine 60, cysteine 63, cysteine 66, cysteine 70, cysteine 99, cysteine 102, cysteine 105, and cysteine 109.

The protein belongs to the complex I 23 kDa subunit family. In terms of assembly, NDH-1 is composed of 13 different subunits. Subunits NuoA, H, J, K, L, M, N constitute the membrane sector of the complex. The cofactor is [4Fe-4S] cluster.

The protein resides in the cell inner membrane. It carries out the reaction a quinone + NADH + 5 H(+)(in) = a quinol + NAD(+) + 4 H(+)(out). Functionally, NDH-1 shuttles electrons from NADH, via FMN and iron-sulfur (Fe-S) centers, to quinones in the respiratory chain. The immediate electron acceptor for the enzyme in this species is believed to be ubiquinone. Couples the redox reaction to proton translocation (for every two electrons transferred, four hydrogen ions are translocated across the cytoplasmic membrane), and thus conserves the redox energy in a proton gradient. The polypeptide is NADH-quinone oxidoreductase subunit I (Erwinia tasmaniensis (strain DSM 17950 / CFBP 7177 / CIP 109463 / NCPPB 4357 / Et1/99)).